A 346-amino-acid chain; its full sequence is HLA class I histocompatibility antigen, alpha chain F (346 aa).

The signal sequence occupies residues 1–21 (MAPRSLLLLLSGALALTDTWA). Residues 22–111 (GSHSLRYFST…LLRRYNQSEA (90 aa)) are alpha-1. Topologically, residues 22–305 (GSHSLRYFST…EQSPQPTIPI (284 aa)) are extracellular. Asn91 and Arg105 together coordinate a peptide antigen. The N-linked (GlcNAc...) asparagine glycan is linked to Asn107. Residues 112–203 (GSHTLQGMNG…ENGKETLQRA (92 aa)) are alpha-2. Intrachain disulfides connect Cys122–Cys185 and Cys224–Cys280. Residues Thr164, Tyr168, and Glu176 each contribute to the a peptide antigen site. The segment at 204 to 295 (DPPKAHVAHH…GLPQPLILRW (92 aa)) is alpha-3. Residues 206–296 (PKAHVAHHPI…LPQPLILRWE (91 aa)) enclose the Ig-like C1-type domain. The interval 296-305 (EQSPQPTIPI) is connecting peptide. The chain crosses the membrane as a helical span at residues 306–329 (VGIVAGLVVLGAVVTGAVVAAVMW). Residues 330–346 (RKKSSDRNRGSYSQAAV) lie on the Cytoplasmic side of the membrane. Positions 336 to 338 (RNR) match the Sorting signal sequence; Golgi-retention signal; ER-retention signal motif.

The protein belongs to the MHC class I family. Forms a heterotrimer with B2M and a self-peptide. Binds a diverse number of peptides ranging from 7 to more than 30 amino acids. Peptide-bound HLA-F-B2M interacts with LILRB1 and LILRB2 but not with KIR3DS1 or KIR3DL2; this interaction is direct. The OC form interacts with KIR3DS1, KIR2DS4 and KIR3DL2; this interaction is direct. Interacts with TAP1-TAP2 complex and CALR; this interaction is required for appropriate folding and peptide loading. Interacts with the coat protein complex II and 14-3-3 proteins; these interactions likely control the anterograde ER-to-Golgi transport of HLA-F. HLA-F-B2M complex interacts with the heavy chain of other MHC class I molecules including HLA-A and HLA-E; this interaction may regulate the intracellular trafficking and the stability of peptide-free MHC class I OCs. N-glycosylated. Expressed in resting B cells (at protein level). Expressed in secondary lymphoid organs rich in B and T cells such as the tonsils, spleen, and thymus (at protein level). Expressed in the endothelial cells of the tonsils. Expressed on activated lymphoid cells including B cells, NK cells, CD4+ T cells and memory T cells (at protein level). Expressed in motor neurons of spinal cord.

The protein resides in the cell membrane. Its subcellular location is the early endosome membrane. It is found in the lysosome membrane. Non-classical major histocompatibility class Ib molecule postulated to play a role in immune surveillance, immune tolerance and inflammation. Functions in two forms, as a heterotrimeric complex with B2M/beta-2 microglobulin and a peptide (peptide-bound HLA-F-B2M) and as an open conformer (OC) devoid of peptide and B2M (peptide-free OC). In complex with B2M, presents non-canonical self-peptides carrying post-translational modifications, particularly phosphorylated self-peptides. Peptide-bound HLA-F-B2M acts as a ligand for LILRB1 inhibitory receptor, a major player in maternal-fetal tolerance. Peptide-free OC acts as a ligand for KIR3DS1 and KIR3DL2 receptors. Upon interaction with activating KIR3DS1 receptor on NK cells, triggers NK cell degranulation and anti-viral cytokine production. Through interaction with KIR3DL2 receptor, inhibits NK and T cell effector functions. May interact with other MHC class I OCs to cross-present exogenous viral, tumor or minor histompatibility antigens to cytotoxic CD8+ T cells, triggering effector and memory responses. May play a role in inflammatory responses in the peripheral nervous system. Through interaction with KIR3DL2, may protect motor neurons from astrocyte-induced toxicity. This is HLA class I histocompatibility antigen, alpha chain F from Homo sapiens (Human).